We begin with the raw amino-acid sequence, 168 residues long: Cyanate hydratase (168 aa).

Active-site residues include Arg94, Glu97, and Ser120.

This sequence belongs to the cyanase family.

It carries out the reaction cyanate + hydrogencarbonate + 3 H(+) = NH4(+) + 2 CO2. Functionally, catalyzes the reaction of cyanate with bicarbonate to produce ammonia and carbon dioxide. The protein is Cyanate hydratase of Oryza sativa subsp. indica (Rice).